The chain runs to 177 residues: Peptide methionine sulfoxide reductase MsrA (177 aa).

Residue Cys11 is part of the active site.

It belongs to the MsrA Met sulfoxide reductase family.

It catalyses the reaction L-methionyl-[protein] + [thioredoxin]-disulfide + H2O = L-methionyl-(S)-S-oxide-[protein] + [thioredoxin]-dithiol. The catalysed reaction is [thioredoxin]-disulfide + L-methionine + H2O = L-methionine (S)-S-oxide + [thioredoxin]-dithiol. In terms of biological role, has an important function as a repair enzyme for proteins that have been inactivated by oxidation. Catalyzes the reversible oxidation-reduction of methionine sulfoxide in proteins to methionine. This chain is Peptide methionine sulfoxide reductase MsrA, found in Trichodesmium erythraeum (strain IMS101).